The chain runs to 217 residues: Small ribosomal subunit protein uS3 (217 aa).

The region spanning 38–106 is the KH type-2 domain; the sequence is IRKFIDNELK…KVHINVIEIK (69 aa).

The protein belongs to the universal ribosomal protein uS3 family. In terms of assembly, part of the 30S ribosomal subunit. Forms a tight complex with proteins S10 and S14.

Binds the lower part of the 30S subunit head. Binds mRNA in the 70S ribosome, positioning it for translation. This is Small ribosomal subunit protein uS3 (rpsC) from Staphylococcus aureus (strain COL).